The following is a 306-amino-acid chain: tRNA dimethylallyltransferase (306 aa).

Position 13-20 (13-20 (GPTGAGKT)) interacts with ATP. A substrate-binding site is contributed by 15–20 (TGAGKT). Interaction with substrate tRNA stretches follow at residues 38–41 (DSRQ) and 161–165 (QRNAR).

The protein belongs to the IPP transferase family. In terms of assembly, monomer. The cofactor is Mg(2+).

The enzyme catalyses adenosine(37) in tRNA + dimethylallyl diphosphate = N(6)-dimethylallyladenosine(37) in tRNA + diphosphate. Catalyzes the transfer of a dimethylallyl group onto the adenine at position 37 in tRNAs that read codons beginning with uridine, leading to the formation of N6-(dimethylallyl)adenosine (i(6)A). The protein is tRNA dimethylallyltransferase of Maridesulfovibrio salexigens (strain ATCC 14822 / DSM 2638 / NCIMB 8403 / VKM B-1763) (Desulfovibrio salexigens).